The following is a 479-amino-acid chain: Anaerobic nitric oxide reductase flavorubredoxin (479 aa).

The segment at 30-210 is zinc metallo-hydrolase; the sequence is LRGSSYNSYL…PFSRLVTPKI (181 aa). 6 residues coordinate Fe cation: His-79, Glu-81, Asp-83, His-147, Asp-166, and His-227. The Flavodoxin-like domain maps to 254-393; sequence ITIFYDTMSN…LCREHGREIA (140 aa). FMN contacts are provided by residues 260-264 and 342-369; these read TMSNN and AFGS…EMSL. A Rubredoxin-like domain is found at 423 to 474; the sequence is GPRMQCSVCQWIYDPAKGEPMQDVAPGTPWSEVPDNFLCPECSLGKDVFEEL. Fe cation contacts are provided by Cys-428, Cys-431, Cys-461, and Cys-464.

It in the N-terminal section; belongs to the zinc metallo-hydrolase group 3 family. In terms of assembly, homotetramer. Fe cation serves as cofactor. The cofactor is FMN.

The protein localises to the cytoplasm. Its pathway is nitrogen metabolism; nitric oxide reduction. Functionally, anaerobic nitric oxide reductase; uses NADH to detoxify nitric oxide (NO), protecting several 4Fe-4S NO-sensitive enzymes. Has at least 2 reductase partners, only one of which (NorW, flavorubredoxin reductase) has been identified. NO probably binds to the di-iron center; electrons enter from the NorW at rubredoxin and are transferred sequentially to the FMN center and the di-iron center. Also able to function as an aerobic oxygen reductase. The polypeptide is Anaerobic nitric oxide reductase flavorubredoxin (Shigella dysenteriae serotype 1 (strain Sd197)).